A 462-amino-acid chain; its full sequence is NAD-capped RNA hydrolase NUDT12 (462 aa).

An N6-succinyllysine modification is found at Lys10. 3 ANK repeats span residues 11–40, 45–74, and 78–98; these read EMIS…SLLN, NGWT…DRSL, and ARQT…ANLL. At Lys185 the chain carries N6-succinyllysine. The Zn(2+) site is built by Cys284 and Cys287. Lys292 bears the N6-succinyllysine mark. The Zn(2+) site is built by Cys302 and Cys307. Substrate-binding positions include Tyr318, 354–356, Glu370, Glu374, and Glu415; that span reads AGF. The Nudix hydrolase domain occupies 319 to 453; the sequence is PRVDPVVIMQ…SRAIAHQLIK (135 aa). Residues Ala354, Glu370, Glu374, and Glu415 each contribute to the Mg(2+) site. Positions 355-376 match the Nudix box motif; it reads GFIEPGETIEDAVRREVEEESG. The short motif at 460-462 is the Microbody targeting signal element; that stretch reads PNL.

Belongs to the Nudix hydrolase family. NudC subfamily. Homodimer. Homodimerization is essential for its catalytic activity and protein stability. Interacts (via ANK repeats) with BLMH. It depends on Mg(2+) as a cofactor. The cofactor is Zn(2+). In terms of tissue distribution, expressed abundantly in the liver and kidney.

The protein resides in the cytoplasm. It is found in the peroxisome. It localises to the cytoplasmic granule. It catalyses the reaction a 5'-end NAD(+)-phospho-ribonucleoside in mRNA + H2O = a 5'-end phospho-adenosine-phospho-ribonucleoside in mRNA + beta-nicotinamide D-ribonucleotide + 2 H(+). It carries out the reaction NAD(+) + H2O = beta-nicotinamide D-ribonucleotide + AMP + 2 H(+). The enzyme catalyses NADH + H2O = reduced beta-nicotinamide D-ribonucleotide + AMP + 2 H(+). The catalysed reaction is NADPH + H2O = reduced beta-nicotinamide D-ribonucleotide + adenosine 2',5'-bisphosphate + 2 H(+). Functionally, mRNA decapping enzyme that specifically removes the nicotinamide adenine dinucleotide (NAD) cap from a subset of mRNAs by hydrolyzing the diphosphate linkage to produce nicotinamide mononucleotide (NMN) and 5' monophosphate mRNA. The NAD-cap is present at the 5'-end of some RNAs; in contrast to the canonical N7 methylguanosine (m7G) cap, the NAD cap promotes mRNA decay. Preferentially acts on NAD-capped transcripts in response to nutrient stress. Also acts on free nicotinamide adenine dinucleotide molecules: hydrolyzes NAD(H) into NMN(H) and AMP, and NADPH into NMNH and 2',5'-ADP. May act to regulate the concentration of peroxisomal nicotinamide nucleotide cofactors required for oxidative metabolism in this organelle. Regulates the levels of circadian clock components PER1, PER2, PER3 and CRY2 in the liver. The polypeptide is NAD-capped RNA hydrolase NUDT12 (Mus musculus (Mouse)).